Here is an 842-residue protein sequence, read N- to C-terminus: Protein P (842 aa).

Residues 1 to 177 (MPLSYQHFRR…FCGSPYSWEQ (177 aa)) are terminal protein domain (TP). The interval 178 to 345 (ELHHGAFLDG…YCLTHLVNLL (168 aa)) is spacer. The interval 186-273 (DGPSRMGEES…AKNIASRSAS (88 aa)) is disordered. The segment covering 223–239 (GPQSQQRPLDGSQQGRS) has biased composition (polar residues). Positions 346–689 (EDWGPCTEHG…YLNLYPVARQ (344 aa)) are polymerase/reverse transcriptase domain (RT). The Reverse transcriptase domain maps to 356 to 599 (KHHIRIPRTP…YSLNFMGYVI (244 aa)). Mg(2+) contacts are provided by Asp428, Asp550, and Asp551.

It belongs to the hepadnaviridae P protein family.

It carries out the reaction DNA(n) + a 2'-deoxyribonucleoside 5'-triphosphate = DNA(n+1) + diphosphate. The enzyme catalyses Endonucleolytic cleavage to 5'-phosphomonoester.. Activated by host HSP70 and HSP40 in vitro to be able to bind the epsilon loop of the pgRNA. Because deletion of the RNase H region renders the protein partly chaperone-independent, the chaperones may be needed indirectly to relieve occlusion of the RNA-binding site by this domain. Inhibited by several reverse-transcriptase inhibitors: Lamivudine, Adefovir and Entecavir. Its function is as follows. Multifunctional enzyme that converts the viral RNA genome into dsDNA in viral cytoplasmic capsids. This enzyme displays a DNA polymerase activity that can copy either DNA or RNA templates, and a ribonuclease H (RNase H) activity that cleaves the RNA strand of RNA-DNA heteroduplexes in a partially processive 3'- to 5'-endonucleasic mode. Neo-synthesized pregenomic RNA (pgRNA) are encapsidated together with the P protein, and reverse-transcribed inside the nucleocapsid. Initiation of reverse-transcription occurs first by binding the epsilon loop on the pgRNA genome, and is initiated by protein priming, thereby the 5'-end of (-)DNA is covalently linked to P protein. Partial (+)DNA is synthesized from the (-)DNA template and generates the relaxed circular DNA (RC-DNA) genome. After budding and infection, the RC-DNA migrates in the nucleus, and is converted into a plasmid-like covalently closed circular DNA (cccDNA). The activity of P protein does not seem to be necessary for cccDNA generation, and is presumably released from (+)DNA by host nuclear DNA repair machinery. The chain is Protein P from Homo sapiens (Human).